Reading from the N-terminus, the 409-residue chain is 4-hydroxy-3-methylbut-2-en-1-yl diphosphate synthase (ferredoxin) (409 aa).

Polar residues predominate over residues 1-12 (MQTLDRPNAPTQ). The tract at residues 1-22 (MQTLDRPNAPTQQPYPEPVYPR) is disordered. Positions 314, 317, 348, and 355 each coordinate [4Fe-4S] cluster.

This sequence belongs to the IspG family. The cofactor is [4Fe-4S] cluster.

The enzyme catalyses (2E)-4-hydroxy-3-methylbut-2-enyl diphosphate + 2 oxidized [2Fe-2S]-[ferredoxin] + H2O = 2-C-methyl-D-erythritol 2,4-cyclic diphosphate + 2 reduced [2Fe-2S]-[ferredoxin] + H(+). The protein operates within isoprenoid biosynthesis; isopentenyl diphosphate biosynthesis via DXP pathway; isopentenyl diphosphate from 1-deoxy-D-xylulose 5-phosphate: step 5/6. Its function is as follows. Converts 2C-methyl-D-erythritol 2,4-cyclodiphosphate (ME-2,4cPP) into 1-hydroxy-2-methyl-2-(E)-butenyl 4-diphosphate. The sequence is that of 4-hydroxy-3-methylbut-2-en-1-yl diphosphate synthase (ferredoxin) from Synechococcus sp. (strain JA-2-3B'a(2-13)) (Cyanobacteria bacterium Yellowstone B-Prime).